The chain runs to 105 residues: Small ribosomal subunit protein eS10B (105 aa).

This sequence belongs to the eukaryotic ribosomal protein eS10 family. As to quaternary structure, component of the small ribosomal subunit (SSU). Mature yeast ribosomes consist of a small (40S) and a large (60S) subunit. The 40S small subunit contains 1 molecule of ribosomal RNA (18S rRNA) and 33 different proteins (encoded by 57 genes). The large 60S subunit contains 3 rRNA molecules (25S, 5.8S and 5S rRNA) and 46 different proteins (encoded by 81 genes). eS10 interacts with GCN1 (via middle region); this interaction is direct and promotes GCN2 kinase activity. In terms of processing, the N-terminus is not modified.

Its subcellular location is the cytoplasm. Its function is as follows. Component of the ribosome, a large ribonucleoprotein complex responsible for the synthesis of proteins in the cell. The small ribosomal subunit (SSU) binds messenger RNAs (mRNAs) and translates the encoded message by selecting cognate aminoacyl-transfer RNA (tRNA) molecules. The large subunit (LSU) contains the ribosomal catalytic site termed the peptidyl transferase center (PTC), which catalyzes the formation of peptide bonds, thereby polymerizing the amino acids delivered by tRNAs into a polypeptide chain. The nascent polypeptides leave the ribosome through a tunnel in the LSU and interact with protein factors that function in enzymatic processing, targeting, and the membrane insertion of nascent chains at the exit of the ribosomal tunnel. eS10 plays a role as a positive regulator of the GCN2 kinase activity by stimulating GCN1-mediated GCN2 activation. This Saccharomyces cerevisiae (strain ATCC 204508 / S288c) (Baker's yeast) protein is Small ribosomal subunit protein eS10B.